Here is a 398-residue protein sequence, read N- to C-terminus: uncharacterized protein (398 aa).

The residue at position 212 (lysine 212) is an N6-(pyridoxal phosphate)lysine.

The protein belongs to the trans-sulfuration enzymes family. The cofactor is pyridoxal 5'-phosphate.

This is an uncharacterized protein from Schizosaccharomyces pombe (strain 972 / ATCC 24843) (Fission yeast).